A 345-amino-acid chain; its full sequence is Transcription factor 19 (345 aa).

An FHA domain is found at Tyr-31–Leu-88. 2 disordered regions span residues Arg-138–Ser-167 and Leu-190–Val-277. Residues Ala-293–Gly-342 form a PHD-type zinc finger. Zn(2+) contacts are provided by Cys-296, Cys-298, Cys-310, Cys-313, His-318, Cys-321, Cys-336, and Cys-339.

The protein localises to the nucleus. Functionally, potential transcription factor that may play a role in the regulation of genes involved in cell cycle G1/S transition. May bind to regulatory elements of genes, including the promoter of the transcription factor FOXO1. This Macaca mulatta (Rhesus macaque) protein is Transcription factor 19 (TCF19).